The sequence spans 71 residues: Biotinylated protein TB7.3 homolog (71 aa).

Positions 2–71 constitute a Biotinyl-binding domain; the sequence is AEDVRAEIVA…QAGDLIAVIS (70 aa). Lysine 37 carries the post-translational modification N6-biotinyllysine.

The polypeptide is Biotinylated protein TB7.3 homolog (Mycobacterium leprae (strain TN)).